The primary structure comprises 533 residues: Cytochrome P450 monooxygenase ltmK (533 aa).

The chain crosses the membrane as a helical span at residues 27-47; sequence VHWLQVIVALLVLIVCIFLYW. N-linked (GlcNAc...) asparagine glycosylation occurs at Asn116. Cys473 lines the heme pocket. A glycan (N-linked (GlcNAc...) asparagine) is linked at Asn528.

Belongs to the cytochrome P450 family. Heme is required as a cofactor.

Its subcellular location is the membrane. Its pathway is secondary metabolite biosynthesis. Its function is as follows. Cytochrome P450 monooxygenase; part of the gene clusters that mediates the biosynthesis of lolitrems, indole-diterpene mycotoxins that are potent tremorgens in mammals, and are synthesized by clavicipitaceous fungal endophytes in association with their grass hosts. The geranylgeranyl diphosphate (GGPP) synthase ltmG is proposed to catalyze the first step in lolitrem biosynthesis. LtmG catalyzes a series of iterative condensations of isopentenyl diphosphate (IPP) with dimethylallyl diphosphate (DMAPP), geranyl diphosphate (GPP), and farnesyl diphosphate (FPP), to form GGPP. GGPP then condenses with indole-3-glycerol phosphate to form 3-geranylgeranylindole, an acyclic intermediate, to be incorporated into paxilline. Either ltmG or ltmC could be responsible for this step, as both are putative prenyl transferases. The FAD-dependent monooxygenase ltmM then catalyzes the epoxidation of the two terminal alkenes of the geranylgeranyl moiety, which is subsequently cyclized by ltmB, to paspaline. The cytochrome P450 monooxygenases ltmQ and ltmP can sequentially oxidize paspaline to terpendole E and terpendole F. Alternatively, ltmP converts paspaline to an intermediate which is oxidized by ltmQ to terpendole F. LtmF, ltmK, ltmE and ltmJ appear to be unique to the epichloe endophytes. The prenyltransferase ltmF is involved in the 27-hydroxyl-O-prenylation. The cytochrome P450 monooxygenase ltmK is required for the oxidative acetal ring formation. The multi-functional prenyltransferase ltmE is required for C20- and C21-prenylations of the indole ring of paspalanes and acts together with the cytochrome P450 monooxygenase ltmJ to yield lolitremanes by multiple oxidations and ring closures. The stereoisomer pairs of lolitriol and lolitrem N or lolitrem B and lolitrem F may be attributed to variations in the way in which ring closure can occur under the action of ltmJ. While the major product of this pathway is lolitrem B, the prenyl transferases and cytochrome P450 monooxygenases identified in this pathway have a remarkable versatility in their regio- and stereo-specificities to generate a diverse range of metabolites that are products of a metabolic grid rather than a linear pathway. The chain is Cytochrome P450 monooxygenase ltmK from Epichloe festucae var. lolii (Neotyphodium lolii).